The following is a 421-amino-acid chain: Serine--tRNA ligase (421 aa).

230 to 232 (TAE) is a binding site for L-serine. ATP is bound at residue 259-261 (RRE). E282 is a binding site for L-serine. 346–349 (EISS) contributes to the ATP binding site. Residue S381 participates in L-serine binding.

The protein belongs to the class-II aminoacyl-tRNA synthetase family. Type-1 seryl-tRNA synthetase subfamily. In terms of assembly, homodimer. The tRNA molecule binds across the dimer.

Its subcellular location is the cytoplasm. The catalysed reaction is tRNA(Ser) + L-serine + ATP = L-seryl-tRNA(Ser) + AMP + diphosphate + H(+). It catalyses the reaction tRNA(Sec) + L-serine + ATP = L-seryl-tRNA(Sec) + AMP + diphosphate + H(+). It functions in the pathway aminoacyl-tRNA biosynthesis; selenocysteinyl-tRNA(Sec) biosynthesis; L-seryl-tRNA(Sec) from L-serine and tRNA(Sec): step 1/1. Functionally, catalyzes the attachment of serine to tRNA(Ser). Is also able to aminoacylate tRNA(Sec) with serine, to form the misacylated tRNA L-seryl-tRNA(Sec), which will be further converted into selenocysteinyl-tRNA(Sec). In Acidithiobacillus ferrooxidans (strain ATCC 23270 / DSM 14882 / CIP 104768 / NCIMB 8455) (Ferrobacillus ferrooxidans (strain ATCC 23270)), this protein is Serine--tRNA ligase.